The chain runs to 336 residues: MTEAQTACATTETPVAAPAAPRWRVADVIALYELPFNDLLFRAQQTHREHFDANAIQLSTLLSIKTGGCEEDCGYCSQSAHHDTGLKAEKLMEVDAVLAAARTAKENGATRFCMGAAWRNPKDRHIEPIKEMIRGVKDMGLETCVTLGMLEEHQAKALAEAGLDYYNHNLDTSPEFYGQIISTRTYQDRLDTLERVRDAGINVCCGGIIGMGESRRERAGLIAQLANMNPYPESVPINNLVAIEGTPLENAQALDPFEFVRTIAVARITMPKAMVRLSAGREQLDDAMQALCFLAGANSMFYGDVLLTTGNPRAEADRKLLARLGMSASEASQLSA.

Residues 54-281 (NAIQLSTLLS…KAMVRLSAGR (228 aa)) form the Radical SAM core domain. C69, C73, and C76 together coordinate [4Fe-4S] cluster. Residues C113, C144, C204, and R276 each coordinate [2Fe-2S] cluster.

This sequence belongs to the radical SAM superfamily. Biotin synthase family. In terms of assembly, homodimer. The cofactor is [4Fe-4S] cluster. [2Fe-2S] cluster is required as a cofactor.

It catalyses the reaction (4R,5S)-dethiobiotin + (sulfur carrier)-SH + 2 reduced [2Fe-2S]-[ferredoxin] + 2 S-adenosyl-L-methionine = (sulfur carrier)-H + biotin + 2 5'-deoxyadenosine + 2 L-methionine + 2 oxidized [2Fe-2S]-[ferredoxin]. It functions in the pathway cofactor biosynthesis; biotin biosynthesis; biotin from 7,8-diaminononanoate: step 2/2. Functionally, catalyzes the conversion of dethiobiotin (DTB) to biotin by the insertion of a sulfur atom into dethiobiotin via a radical-based mechanism. This is Biotin synthase from Burkholderia mallei (strain ATCC 23344).